We begin with the raw amino-acid sequence, 690 residues long: MSCFLQVMNPITGQNSWQERGDDYDYHLEVANAGFGDMLHDWERNQKYFGALRKTIAGMREAGREVHVLDIGTGTGILSMMALAAGADSVTACEAFLPMANCAEKILAANGAGDKVRLIRKRSTEIQVGEDMPRKANLLVAELLDTELIGEGAIGIYNHAHAELLTEDALCIPARARCYAQVAQSPLAAQWNSLKTIANLDGEPLLHPPEQLKSCQGEAALHDVQLSQLPISAFRPLTDPVEIFQFDFQRKQEREKQRAQLLKLQSKQPGAAELVFYWWDIQLDDGGEILLSCAPYWAHPQLKELAAEKAKDHPLPNVVPWRDHWMQAIYYIPKPLQLLEAGKSFHLSCHHDEYSLWFDAREEAPTKSVRRHTCTCDLHMTYSRGRIGQLNQSPRNKRYLRYLEESIEAEKSNVLVLGNGCLLGLASSALGAASVLLHEPHRFSRRLLESIVKHNQLKNVQFLDKVEELEDSQLAALTHIFAEPYFLNAILPWDNFYFGSLLTKIKDRLPEGVKISPCSARIYALPVEFLDLHKIRAPVGSCEGFDLRLFDEMVERSAEQAVSLVEAQPLWEYPCRALSEPQEVLSVDFSNFGQEHSLKGSIELKHTGICNGVALWVYWQLVEDNSPRSIVSSGPSEPVVPGEFVKWDMFVRQGVHFPRKPKDAVTHLEWSTDFKPLLGELNFSFGQKKL.

2 consecutive SAM-dependent MTase PRMT-type domains span residues 14-357 (QNSW…YSLW) and 366-690 (TKSV…QKKL).

It belongs to the class I-like SAM-binding methyltransferase superfamily. Protein arginine N-methyltransferase family. PRMT7 subfamily.

Its function is as follows. Essential arginine methyltransferase that can both catalyze the formation of omega-N monomethylarginine (MMA) and symmetrical dimethylarginine (sDMA). Specifically mediates the symmetrical dimethylation of arginine residues in the small nuclear ribonucleoproteins SmD1 and SmD3. This Drosophila sechellia (Fruit fly) protein is Protein arginine N-methyltransferase 7 (Art7).